The chain runs to 65 residues: Large ribosomal subunit protein bL35 (65 aa).

Belongs to the bacterial ribosomal protein bL35 family.

The sequence is that of Large ribosomal subunit protein bL35 from Prochlorococcus marinus (strain MIT 9215).